A 465-amino-acid chain; its full sequence is RuvB-like helicase 2 (465 aa).

Residue 72–79 (GPPSTGKT) coordinates ATP.

Belongs to the RuvB family. May form heterododecamers with RVB1. Component of the SWR1 chromatin remodeling complex, the INO80 chromatin remodeling complex, and of the R2TP complex. Interacts with dil1.

It localises to the nucleus. It carries out the reaction ATP + H2O = ADP + phosphate + H(+). DNA helicase which participates in several chromatin remodeling complexes, including the SWR1 and the INO80 complexes. The SWR1 complex mediates the ATP-dependent exchange of histone H2A for the H2A variant HZT1 leading to transcriptional regulation of selected genes by chromatin remodeling. The INO80 complex remodels chromatin by shifting nucleosomes and is involved in DNA repair. Also involved in pre-rRNA processing. The sequence is that of RuvB-like helicase 2 (rvb2) from Schizosaccharomyces pombe (strain 972 / ATCC 24843) (Fission yeast).